We begin with the raw amino-acid sequence, 162 residues long: Cytochrome c-type biogenesis protein CcmE (162 aa).

At 1 to 8 (MNPVRKKR) the chain is on the cytoplasmic side. A helical; Signal-anchor for type II membrane protein membrane pass occupies residues 9-29 (LIIVLAIVAGVGAAVGLALSA). The Periplasmic segment spans residues 30-162 (LQQNINLFYT…GETSYNQEGK (133 aa)). 2 residues coordinate heme: H124 and Y128. The span at 139–148 (DSGQLKHYEN) shows a compositional bias: basic and acidic residues. Residues 139–162 (DSGQLKHYENGKAAGETSYNQEGK) form a disordered region.

The protein belongs to the CcmE/CycJ family.

It is found in the cell inner membrane. In terms of biological role, heme chaperone required for the biogenesis of c-type cytochromes. Transiently binds heme delivered by CcmC and transfers the heme to apo-cytochromes in a process facilitated by CcmF and CcmH. This chain is Cytochrome c-type biogenesis protein CcmE, found in Pseudomonas aeruginosa (strain ATCC 15692 / DSM 22644 / CIP 104116 / JCM 14847 / LMG 12228 / 1C / PRS 101 / PAO1).